A 911-amino-acid chain; its full sequence is Protein translocase subunit SecA (911 aa).

ATP-binding positions include glutamine 86, glycine 104–threonine 108, and aspartate 512. Residues alanine 869–lysine 888 form a disordered region. 4 residues coordinate Zn(2+): cysteine 895, cysteine 897, cysteine 906, and histidine 907.

This sequence belongs to the SecA family. In terms of assembly, monomer and homodimer. Part of the essential Sec protein translocation apparatus which comprises SecA, SecYEG and auxiliary proteins SecDF-YajC and YidC. It depends on Zn(2+) as a cofactor.

It localises to the cell inner membrane. It is found in the cytoplasm. It catalyses the reaction ATP + H2O + cellular proteinSide 1 = ADP + phosphate + cellular proteinSide 2.. Functionally, part of the Sec protein translocase complex. Interacts with the SecYEG preprotein conducting channel. Has a central role in coupling the hydrolysis of ATP to the transfer of proteins into and across the cell membrane, serving both as a receptor for the preprotein-SecB complex and as an ATP-driven molecular motor driving the stepwise translocation of polypeptide chains across the membrane. This is Protein translocase subunit SecA from Bordetella parapertussis (strain 12822 / ATCC BAA-587 / NCTC 13253).